A 525-amino-acid polypeptide reads, in one-letter code: GMP synthase [glutamine-hydrolyzing] (525 aa).

The 199-residue stretch at 9–207 (RILILDFGSQ…VRDICQCEAL (199 aa)) folds into the Glutamine amidotransferase type-1 domain. Catalysis depends on C86, which acts as the Nucleophile. Catalysis depends on residues H181 and E183. The region spanning 208 to 400 (WTPAKIIDDA…LGLPYDMLYR (193 aa)) is the GMPS ATP-PPase domain. Residue 235–241 (SGGVDSS) participates in ATP binding.

In terms of assembly, homodimer.

It catalyses the reaction XMP + L-glutamine + ATP + H2O = GMP + L-glutamate + AMP + diphosphate + 2 H(+). The protein operates within purine metabolism; GMP biosynthesis; GMP from XMP (L-Gln route): step 1/1. Functionally, catalyzes the synthesis of GMP from XMP. This is GMP synthase [glutamine-hydrolyzing] from Shigella flexneri.